A 1156-amino-acid chain; its full sequence is Chromosome partition protein Smc (1156 aa).

Residue 37–44 (PNGAGKSN) coordinates ATP. Residues 167-499 (SGIGEYERKK…AIEREVRSFS (333 aa)) are a coiled coil. Positions 509 to 624 (KGVYGSVSEL…VENFESAKAI (116 aa)) constitute an SMC hinge domain. A coiled-coil region spans residues 654–1001 (GELNKRYYEE…EETENKKRKV (348 aa)).

Belongs to the SMC family. Homodimer.

Its subcellular location is the cytoplasm. Functionally, required for chromosome condensation and partitioning. The polypeptide is Chromosome partition protein Smc (Aquifex aeolicus (strain VF5)).